Consider the following 212-residue polypeptide: Thymidylate kinase (212 aa).

10-17 contributes to the ATP binding site; that stretch reads GPDGAGKT.

Belongs to the thymidylate kinase family.

The enzyme catalyses dTMP + ATP = dTDP + ADP. In terms of biological role, phosphorylation of dTMP to form dTDP in both de novo and salvage pathways of dTTP synthesis. This Exiguobacterium sibiricum (strain DSM 17290 / CCUG 55495 / CIP 109462 / JCM 13490 / 255-15) protein is Thymidylate kinase.